Reading from the N-terminus, the 33-residue chain is Photosystem II reaction center protein T (33 aa).

A helical transmembrane segment spans residues 3 to 23; the sequence is ALVYTFLLVSTLGIIFFAIFF.

Belongs to the PsbT family. PSII is composed of 1 copy each of membrane proteins PsbA, PsbB, PsbC, PsbD, PsbE, PsbF, PsbH, PsbI, PsbJ, PsbK, PsbL, PsbM, PsbT, PsbY, PsbZ, Psb30/Ycf12, at least 3 peripheral proteins of the oxygen-evolving complex and a large number of cofactors. It forms dimeric complexes.

It is found in the plastid. Its subcellular location is the chloroplast thylakoid membrane. Its function is as follows. Found at the monomer-monomer interface of the photosystem II (PS II) dimer, plays a role in assembly and dimerization of PSII. PSII is a light-driven water plastoquinone oxidoreductase, using light energy to abstract electrons from H(2)O, generating a proton gradient subsequently used for ATP formation. The polypeptide is Photosystem II reaction center protein T (Helianthus annuus (Common sunflower)).